A 579-amino-acid polypeptide reads, in one-letter code: L-arabinonate dehydratase (579 aa).

C59 provides a ligand contact to [2Fe-2S] cluster. E91 contacts Mg(2+). C127 serves as a coordination point for [2Fe-2S] cluster. D128 serves as a coordination point for Mg(2+). Position 200 (C200) interacts with [2Fe-2S] cluster. E453 provides a ligand contact to Mg(2+).

The protein belongs to the IlvD/Edd family. In terms of assembly, homotetramer. [2Fe-2S] cluster serves as cofactor. Mg(2+) is required as a cofactor.

The catalysed reaction is L-arabinonate = 2-dehydro-3-deoxy-L-arabinonate + H2O. The enzyme catalyses D-galactonate = 2-dehydro-3-deoxy-D-galactonate + H2O. It carries out the reaction D-fuconate = 2-dehydro-3-deoxy-D-fuconate + H2O. It participates in carbohydrate metabolism. Its function is as follows. Catalyzes the dehydration of L-arabinonate to 2-dehydro-3-deoxy-L-arabinonate during L-arabinose degradation. Can also dehydrate D-galactonate and D-fuconate with good catalytic efficiency. Has weak activity with D-xylonate and D-gluconate. This Rhizobium leguminosarum bv. trifolii (strain WSM2304) protein is L-arabinonate dehydratase.